A 78-amino-acid polypeptide reads, in one-letter code: Acyl carrier protein (78 aa).

Residues 2-77 enclose the Carrier domain; that stretch reads SNLEERVKKI…AAIDYVTANA (76 aa). Ser-37 bears the O-(pantetheine 4'-phosphoryl)serine mark.

It belongs to the acyl carrier protein (ACP) family. In terms of processing, 4'-phosphopantetheine is transferred from CoA to a specific serine of apo-ACP by AcpS. This modification is essential for activity because fatty acids are bound in thioester linkage to the sulfhydryl of the prosthetic group.

The protein resides in the cytoplasm. Its pathway is lipid metabolism; fatty acid biosynthesis. Functionally, carrier of the growing fatty acid chain in fatty acid biosynthesis. The sequence is that of Acyl carrier protein from Vibrio vulnificus (strain CMCP6).